The sequence spans 299 residues: Regucalcin (299 aa).

Glu18 serves as a coordination point for a divalent metal cation. Residues Arg101, Asn103, and Glu121 each coordinate substrate. A divalent metal cation is bound by residues Asn154 and Asp204. The active-site Proton donor/acceptor is Asp204. Residues Lys244 and Lys253 each carry the N6-succinyllysine modification.

It belongs to the SMP-30/CGR1 family. As to quaternary structure, monomer. The cofactor is Zn(2+). It depends on Mn(2+) as a cofactor. Ca(2+) is required as a cofactor. Mg(2+) serves as cofactor.

Its subcellular location is the cytoplasm. It carries out the reaction D-glucono-1,5-lactone + H2O = D-gluconate + H(+). It functions in the pathway cofactor biosynthesis; L-ascorbate biosynthesis via UDP-alpha-D-glucuronate pathway; L-ascorbate from UDP-alpha-D-glucuronate: step 3/4. Gluconolactonase with low activity towards other sugar lactones, including gulonolactone and galactonolactone. Catalyzes a key step in ascorbic acid (vitamin C) biosynthesis. Can also hydrolyze diisopropyl phosphorofluoridate and phenylacetate (in vitro). Calcium-binding protein. Modulates Ca(2+) signaling, and Ca(2+)-dependent cellular processes and enzyme activities. The protein is Regucalcin (RGN) of Bos taurus (Bovine).